Consider the following 232-residue polypeptide: NAD(P)H-quinone oxidoreductase subunit K 1 (232 aa).

[4Fe-4S] cluster contacts are provided by Cys-49, Cys-50, Cys-114, and Cys-145.

It belongs to the complex I 20 kDa subunit family. NDH-1 can be composed of about 15 different subunits; different subcomplexes with different compositions have been identified which probably have different functions. It depends on [4Fe-4S] cluster as a cofactor.

The protein resides in the cell inner membrane. It catalyses the reaction a plastoquinone + NADH + (n+1) H(+)(in) = a plastoquinol + NAD(+) + n H(+)(out). The catalysed reaction is a plastoquinone + NADPH + (n+1) H(+)(in) = a plastoquinol + NADP(+) + n H(+)(out). Functionally, NDH-1 shuttles electrons from an unknown electron donor, via FMN and iron-sulfur (Fe-S) centers, to quinones in the respiratory and/or the photosynthetic chain. The immediate electron acceptor for the enzyme in this species is believed to be plastoquinone. Couples the redox reaction to proton translocation, and thus conserves the redox energy in a proton gradient. Cyanobacterial NDH-1 also plays a role in inorganic carbon-concentration. The chain is NAD(P)H-quinone oxidoreductase subunit K 1 from Gloeobacter violaceus (strain ATCC 29082 / PCC 7421).